The following is a 471-amino-acid chain: 3-isopropylmalate dehydratase large subunit (471 aa).

[4Fe-4S] cluster contacts are provided by Cys-347, Cys-409, and Cys-412.

It belongs to the aconitase/IPM isomerase family. LeuC type 1 subfamily. Heterodimer of LeuC and LeuD. [4Fe-4S] cluster is required as a cofactor.

It catalyses the reaction (2R,3S)-3-isopropylmalate = (2S)-2-isopropylmalate. It functions in the pathway amino-acid biosynthesis; L-leucine biosynthesis; L-leucine from 3-methyl-2-oxobutanoate: step 2/4. Functionally, catalyzes the isomerization between 2-isopropylmalate and 3-isopropylmalate, via the formation of 2-isopropylmaleate. This Buchnera aphidicola subsp. Rhopalosiphum padi protein is 3-isopropylmalate dehydratase large subunit.